The chain runs to 263 residues: uncharacterized protein (263 aa).

16–23 contributes to the ATP binding site; the sequence is AKGGTGKT.

To M.jannaschii MJ0547 and MJ0169.

This is an uncharacterized protein from Methanocaldococcus jannaschii (strain ATCC 43067 / DSM 2661 / JAL-1 / JCM 10045 / NBRC 100440) (Methanococcus jannaschii).